The following is a 631-amino-acid chain: Forkhead box protein O1 (631 aa).

A compositionally biased stretch (pro residues) spans 1–11; that stretch reads MAEAPQPPPPL. Disordered stretches follow at residues 1–57, 90–147, 223–324, and 372–404; these read MAEA…PAAG, DIRQ…SRRN, SSWW…MPEQ, and PNSSTQSSPASMMQQSGYLFTSPNTSLGSPNSE. Composition is skewed to low complexity over residues 37–48 and 100–135; these read NPSSSANSSPAP and QQQQQHSQQQQEALTLLAPSVPSALSPASSPSPLGA. The fork-head DNA-binding region spans 149 to 243; sequence WGNLSYADLI…KNGKSPRRRA (95 aa). Residues 253–264 show a composition bias toward basic residues; the sequence is AKSRGRAAKKKA. Residues 265–282 show a composition bias toward low complexity; that stretch reads SMQSSQDGSSDSPGSQFS. Polar residues-rich tracts occupy residues 303–315 and 381–403; these read RPRTSSNASTISG and ASMMQQSGYLFTSPNTSLGSPNS.

In terms of processing, phosphorylated by AKT1; insulin-induced. Post-translationally, IGF1 rapidly induces phosphorylation of Thr-28, Ser-245 and Ser-308. Phosphorylation of Ser-245 decreases DNA-binding activity and promotes the phosphorylation of Thr-28, and Ser-308, which leads to nuclear exclusion and loss of function. Phosphorylation of Ser-318 is independent of IGF1 and leads to reduced function. Localized to the animal hemisphere during early cleavage stages. At early tadpole stages, expressed in the branchial arches, pronephros and liver. Within the head, expressed in the forming thyroid gland and in head mesenchyme anterior to the eyes.

It localises to the cytoplasm. Its subcellular location is the nucleus. Transcription factor that regulates metabolic homeostasis in response to oxidative stress. Binds to the consensus sequence 5'-TT[G/A]TTTTG-3' and the related Daf-16 family binding element (DBE) with consensus sequence 5'-TT[G/A]TTTAC-3'. Main regulator of redox balance and osteoblast numbers and controls bone mass. Orchestrates the endocrine function of the skeleton in regulating glucose metabolism. Also acts as a key regulator of chondrogenic commitment of skeletal progenitor cells in response to lipid availability: when lipids levels are low, translocates to the nucleus and promotes expression of sox9, which induces chondrogenic commitment and suppresses fatty acid oxidation. Acts synergistically with atf4 to suppress osteocalcin/bglap activity, increasing glucose levels and triggering glucose intolerance and insulin insensitivity. Also suppresses the transcriptional activity of runx2, an upstream activator of osteocalcin/bglap. May act as a positive regulator of apoptosis in cardiac smooth muscle cells as a result of its transcriptional activation of pro-apoptotic genes. The polypeptide is Forkhead box protein O1 (Xenopus laevis (African clawed frog)).